A 197-amino-acid chain; its full sequence is UDP-N-acetylglucosamine transferase subunit alg13 (197 aa).

Residues 174 to 197 (VRGPDQKNQPTLEQVMSDEMGFVD) form a disordered region.

Belongs to the glycosyltransferase 28 family. Heterodimer with alg14 to form a functional enzyme.

Its subcellular location is the endoplasmic reticulum. The enzyme catalyses an N-acetyl-alpha-D-glucosaminyl-diphospho-di-trans,poly-cis-dolichol + UDP-N-acetyl-alpha-D-glucosamine = an N,N'-diacetylchitobiosyl-diphospho-di-trans,poly-cis-dolichol + UDP + H(+). Its function is as follows. Involved in protein N-glycosylation. Essential for the second step of the dolichol-linked oligosaccharide pathway. In Aspergillus fumigatus (strain ATCC MYA-4609 / CBS 101355 / FGSC A1100 / Af293) (Neosartorya fumigata), this protein is UDP-N-acetylglucosamine transferase subunit alg13 (alg13).